The chain runs to 429 residues: GTPase Obg (429 aa).

Positions 1–158 (MFVDQVKIYV…RNVQLELKVL (158 aa)) constitute an Obg domain. The interval 124–145 (RGNKRFATPANPAPELSENGEP) is disordered. Residues 159–329 (ADVGLVGFPS…LLLAIADKLE (171 aa)) form the OBG-type G domain. Residues 165–172 (GFPSVGKS), 190–194 (FTTIV), 212–215 (DLPG), 282–285 (NKMD), and 310–312 (SAV) each bind GTP. Mg(2+)-binding residues include Ser172 and Thr192. The OCT domain maps to 351–429 (KYVADEPDFE…LLDYEFEFMD (79 aa)).

The protein belongs to the TRAFAC class OBG-HflX-like GTPase superfamily. OBG GTPase family. As to quaternary structure, monomer. It depends on Mg(2+) as a cofactor.

The protein resides in the cytoplasm. An essential GTPase which binds GTP, GDP and possibly (p)ppGpp with moderate affinity, with high nucleotide exchange rates and a fairly low GTP hydrolysis rate. Plays a role in control of the cell cycle, stress response, ribosome biogenesis and in those bacteria that undergo differentiation, in morphogenesis control. This Listeria monocytogenes serotype 4a (strain HCC23) protein is GTPase Obg.